Reading from the N-terminus, the 255-residue chain is NAP1-related protein 2 (255 aa).

Residues 19–60 are a coiled coil; that stretch reads IDAELVLSIEKLQEIQDDLEKINEKASDEVLEVEQKYNVIRK. The interval 213–255 is disordered; that stretch reads NPLTYFNNDADEEDFDGDDDGDEEEKEGDSDEDDDEEDEVGEE. Over residues 221-255 the composition is skewed to acidic residues; that stretch reads DADEEDFDGDDDGDEEEKEGDSDEDDDEEDEVGEE.

The protein belongs to the nucleosome assembly protein (NAP) family. Can form homomeric and heteromeric protein complexes with NRP1. Binds histones H2A and H2B and associates with chromatin in vivo. Ubiquitous.

It localises to the cytoplasm. The protein resides in the nucleus. Acts as a histone H2A/H2B chaperone in nucleosome assembly, playing a critical role for the correct expression of genes involved in root proliferation and patterning. Required with NRP1 for the maintenance of cell proliferation and differentiation in postembryonic root growth. Involved in both intramolecular and intermolecular somatic homologous recombination. The chain is NAP1-related protein 2 (NRP2) from Arabidopsis thaliana (Mouse-ear cress).